The primary structure comprises 193 residues: Signal peptidase I T (193 aa).

Residues 1-25 (MTEEKNTNTEKTAKKKTNTYLEWGK) lie on the Cytoplasmic side of the membrane. Residues 26–42 (AIVIAVLLALLIRHFLF) form a helical membrane-spanning segment. Residues 43–193 (EPYLVEGSSM…FPFNEMRQTK (151 aa)) are Extracellular-facing. Catalysis depends on residues S51 and K93.

It belongs to the peptidase S26 family.

It localises to the cell membrane. It carries out the reaction Cleavage of hydrophobic, N-terminal signal or leader sequences from secreted and periplasmic proteins.. The polypeptide is Signal peptidase I T (sipT) (Bacillus subtilis (strain 168)).